Consider the following 933-residue polypeptide: Phosphoenolpyruvate carboxylase (933 aa).

Residues His158 and Lys592 contribute to the active site.

It belongs to the PEPCase type 1 family. Requires Mg(2+) as cofactor.

The enzyme catalyses oxaloacetate + phosphate = phosphoenolpyruvate + hydrogencarbonate. Functionally, forms oxaloacetate, a four-carbon dicarboxylic acid source for the tricarboxylic acid cycle. The protein is Phosphoenolpyruvate carboxylase of Nitrosomonas eutropha (strain DSM 101675 / C91 / Nm57).